A 165-amino-acid chain; its full sequence is uncharacterized protein (165 aa).

Residues 76 to 161 (LEQVESALDD…LKRLIREKLT (86 aa)) enclose the RCK C-terminal domain.

This is an uncharacterized protein from Bacillus subtilis (strain 168).